Here is a 1011-residue protein sequence, read N- to C-terminus: Protein FAM83B (1011 aa).

A DUF1669 region spans residues 1–283 (METSSMLSSL…RTLYARSCVP (283 aa)). The required for interaction with RAF1 and for the function stretch occupies residues 1–284 (METSSMLSSL…TLYARSCVPS (284 aa)). Phosphoserine occurs at positions 334, 422, 424, 466, and 543. The tract at residues 555 to 585 (EVNSCTTGSSNSTIIGSQGSETPKEVPDTPT) is disordered. The span at 557–574 (NSCTTGSSNSTIIGSQGS) shows a compositional bias: low complexity. Phosphoserine is present on Ser-664. Disordered stretches follow at residues 691-738 (NRVR…TKSV) and 750-769 (ESNK…SFLK). Positions 694-705 (RQPEKPKEDLLK) are enriched in basic and acidic residues. 2 stretches are compositionally biased toward polar residues: residues 706–715 (SSKSMHNVTH) and 727–738 (RNSPSGTTTKSV). The span at 750–762 (ESNKELASKKEVK) shows a compositional bias: basic and acidic residues. At Thr-782 the chain carries Phosphothreonine. Ser-802 is modified (phosphoserine). The segment at 807–928 (LVSEGEENQK…TSSELLRSHS (122 aa)) is disordered. Over residues 813–828 (ENQKPKKSDTKVDSSP) the composition is skewed to basic and acidic residues. 3 positions are modified to phosphoserine: Ser-852, Ser-869, and Ser-915. Positions 913-923 (TSSPRPTSSEL) are enriched in low complexity.

This sequence belongs to the FAM83 family. In terms of assembly, interacts with EGFR; positively regulates EGFR inducing its autophosphorylation in absence of stimulation by EGF. Interacts with RAF1; displaces 14-3-3 proteins from RAF1 and activates RAF1 within the RAS/MAPK signaling cascade. Interacts with AKT1, PIK3CA and PIK3R1; activates the PI3K/AKT signaling cascade. Directly interacts (via DUF1669) with casein kinase isoforms CSNK1A1, CSNK1A1L, CSNK1D and CSNK1E. In terms of processing, phosphorylated in vitro by CSNK1A1.

The protein localises to the cytoplasm. Its subcellular location is the membrane. Its function is as follows. Probable proto-oncogene that functions in the epidermal growth factor receptor/EGFR signaling pathway. Activates both the EGFR itself and downstream RAS/MAPK and PI3K/AKT/TOR signaling cascades. This is Protein FAM83B from Homo sapiens (Human).